Consider the following 177-residue polypeptide: Large ribosomal subunit protein uL6 (177 aa).

Residues 152-171 show a composition bias toward basic and acidic residues; that stretch reads RPPEPYKGKGVRYDDEEVRR. Residues 152-177 form a disordered region; it reads RPPEPYKGKGVRYDDEEVRRKEAKKK.

This sequence belongs to the universal ribosomal protein uL6 family. As to quaternary structure, part of the 50S ribosomal subunit.

Functionally, this protein binds to the 23S rRNA, and is important in its secondary structure. It is located near the subunit interface in the base of the L7/L12 stalk, and near the tRNA binding site of the peptidyltransferase center. The chain is Large ribosomal subunit protein uL6 from Shewanella oneidensis (strain ATCC 700550 / JCM 31522 / CIP 106686 / LMG 19005 / NCIMB 14063 / MR-1).